The primary structure comprises 732 residues: Catalase-peroxidase (732 aa).

The segment at 1 to 23 (MSEQSRCPVTGRTADSPATGSGL) is disordered. Residues 97–220 (WHSAGTYRTS…LAAVQMGLIY (124 aa)) constitute a cross-link (tryptophyl-tyrosyl-methioninium (Trp-Tyr) (with M-246)). The active-site Proton acceptor is the His-98. Positions 220-246 (YVNPEGPDGKPDPVAAGRDIRETFARM) form a cross-link, tryptophyl-tyrosyl-methioninium (Tyr-Met) (with W-97). His-261 serves as a coordination point for heme b.

Belongs to the peroxidase family. Peroxidase/catalase subfamily. In terms of assembly, homodimer or homotetramer. It depends on heme b as a cofactor. Formation of the three residue Trp-Tyr-Met cross-link is important for the catalase, but not the peroxidase activity of the enzyme.

The catalysed reaction is H2O2 + AH2 = A + 2 H2O. It carries out the reaction 2 H2O2 = O2 + 2 H2O. Its function is as follows. Bifunctional enzyme with both catalase and broad-spectrum peroxidase activity. This is Catalase-peroxidase from Prosthecochloris aestuarii (strain DSM 271 / SK 413).